We begin with the raw amino-acid sequence, 432 residues long: Peptidase B (432 aa).

2 residues coordinate Mn(2+): Lys-196 and Asp-201. Lys-208 is a catalytic residue. Mn(2+) contacts are provided by Asp-219, Asp-278, and Glu-280. The active site involves Arg-282.

Belongs to the peptidase M17 family. In terms of assembly, homohexamer. Mn(2+) is required as a cofactor.

Its subcellular location is the cytoplasm. The catalysed reaction is Release of an N-terminal amino acid, Xaa, from a peptide or arylamide. Xaa is preferably Glu or Asp but may be other amino acids, including Leu, Met, His, Cys and Gln.. In terms of biological role, probably plays an important role in intracellular peptide degradation. This chain is Peptidase B, found in Yersinia pseudotuberculosis serotype IB (strain PB1/+).